We begin with the raw amino-acid sequence, 411 residues long: Basic leucine zipper 10 (411 aa).

Disordered stretches follow at residues 1 to 36, 76 to 99, 140 to 251, and 362 to 411; these read MNSI…DEVS, SLPS…DSGN, SVKP…NDLK, and NNFA…KCVD. A compositionally biased stretch (polar residues) spans 24–36; that stretch reads PDSSKPVTADEVS. Positions 89 to 98 are enriched in basic and acidic residues; sequence DSRFRDRDSG. Polar residues-rich tracts occupy residues 146 to 173 and 183 to 193; these read STSS…TSSL and SMKQVTSGSSR. Ser-196 bears the Phosphoserine mark. A compositionally biased stretch (acidic residues) spans 196–206; sequence SDDEDLDEENE. Positions 215–278 constitute a bZIP domain; sequence DVKKSRRMLS…DEAAVGNRIL (64 aa). Positions 217-236 are basic motif; sequence KKSRRMLSNRESARRSRRRK. Residues 219 to 226 carry the Nuclear localization signal motif; it reads SRRMLSNR. Positions 243 to 257 are leucine-zipper; that stretch reads LETQVNDLKGEHSSL. Positions 368–390 are enriched in polar residues; it reads PSQTSSPLQRIRNGQNHHVTPSA.

It belongs to the bZIP family. As to quaternary structure, forms a heterodimer with BZIP1, BZIP2, BZIP9, BZIP11, BZIP44, BZIP53 and BZIP63. Interacts with ABI3 and forms a complex made of ABI3, BZIP53 and BZIP10. Binding with LSD1 leads to cytoplasmic retention. In terms of tissue distribution, expressed in roots, shoots, stems, young leaves, trichomes, hydathodes, siliques, seeds, and flowers, mostly in vascular tissues.

It localises to the nucleus. It is found in the cytoplasm. Functionally, transcription factor that binds to the C-box-like motif (5'-TGCTGACGTCA-3') and G-box-like motif (5'-CCACGTGGCC-3'), ABRE elements, of gene promoters. Binds to the 5'-ACGT-3' motif of seed storage protein (SSP) encoding gene promoters (e.g. At2S and CRU3) and promotes their expression in seeds when in complex with ABI3 and BZIP53. Involved in the defense responses to the biotrophic pathogen Hyaloperonospora parasitica and oxidative stress responses; mediates positively cell death. Promotes BZIP53-mediated response to hypoosmolarity stress that leads to POX1/PRODH1 accumulation. The protein is Basic leucine zipper 10 (BZIP10) of Arabidopsis thaliana (Mouse-ear cress).